We begin with the raw amino-acid sequence, 447 residues long: MKILLLCVALLLTWDNGMVLGEQEFSDNELQELSTQGSRYVNKEIQNAVQGVKHIKTLIEKTNAERKSLLNSLEEAKKKKEGALDDTRDSEMKLKAFPEVCNETMMALWEECKPCLKHTCMKFYARVCRSGSGLVGRQLEEFLNQSSPFYFWMNGDRIDSLLESDRQQSQVLDAMQDSFTRASGIIDTLFQDRFFTHEPQDIHHFSPMGFPHKRPHFLYPKSRLVRSLMPLSHYGPLSFHNMFQPFFDMIHQAQQAMDVQLHSPALQFPDVDFLKEGEDDPTVCKEIRHNSTGCLKMKGQCEKCQEILSVDCSTNNPAQANLRQELNDSLQVAERLTQQYNELLHSLQSKMLNTSSLLEQLNDQFTWVSQLANLTQGDDQYLRVSTVTTHSSDSEVPSRVTEVVVKLFDSDPITVVLPEEVSKDNPKFMDTVAEKALQEYRRKSRME.

The N-terminal stretch at 1–21 (MKILLLCVALLLTWDNGMVLG) is a signal peptide. The Nuclear localization signal signature appears at 77-80 (KKKK). 5 disulfide bridges follow: Cys101-Cys312, Cys112-Cys304, Cys115-Cys301, Cys120-Cys294, and Cys128-Cys284. Residue Asn102 is glycosylated (N-linked (GlcNAc...) asparagine). At Ser132 the chain carries Phosphoserine. 5 N-linked (GlcNAc...) asparagine glycosylation sites follow: Asn144, Asn290, Asn327, Asn353, and Asn373. Position 394 is a phosphoserine (Ser394). Positions 441–445 (RRKSR) match the Nuclear localization signal motif.

This sequence belongs to the clusterin family. As to quaternary structure, antiparallel disulfide-linked heterodimer of an alpha chain and a beta chain. Self-associates and forms higher oligomers. Interacts with a broad range of misfolded proteins, including APP, APOC2 and LYZ. Slightly acidic pH promotes interaction with misfolded proteins. Forms high-molecular weight oligomers upon interaction with misfolded proteins. Interacts with APOA1, LRP2, CLUAP1 and PON1. Interacts with the complement membrane attack complex. Interacts (via alpha chain) with XRCC6. Interacts with SYVN1, COMMD1, BTRC, CUL1 and with ubiquitin and SCF (SKP1-CUL1-F-box protein) E3 ubiquitin-protein ligase complexes. Interacts (via alpha chain) with BAX in stressed cells, where BAX undergoes a conformation change leading to association with the mitochondrial membrane. Does not interact with BAX in unstressed cells. Found in a complex with LTF, CLU, EPPIN and SEMG1. Interacts (immaturely glycosylated pre-secreted form) with HSPA5; this interaction promotes CLU stability and facilitates stress-induced CLU retrotranslocation from the secretory pathway to the mitochondria, thereby reducing stress-induced apoptosis by stabilizing mitochondrial membrane integrity. Interacts with BCL2L1; this interaction releases and activates BAX and promotes cell death. Interacts with TGFBR2 and ACVR1. Interacts (secreted form) with STMN3; this interaction may act as an important modulator during neuronal differentiation. Interacts with VLDLR and LRP8. In terms of processing, proteolytically cleaved on its way through the secretory system, probably within the Golgi lumen. Proteolytic cleavage is not necessary for its chaperone activity. All non-secreted forms are not proteolytically cleaved. Chaperone activity of uncleaved forms is dependent on a non-reducing environment. Post-translationally, polyubiquitinated, leading to proteasomal degradation. Under cellular stress, the intracellular level of cleaved form is reduced due to proteasomal degradation. Extensively glycosylated with sulfated N-linked carbohydrates. About 30% of the protein mass is comprised of complex N-linked carbohydrate. Endoplasmic reticulum (ER) stress induces changes in glycosylation status and increases level of hypoglycosylated forms. Core carbohydrates are essential for chaperone activity. Non-secreted forms are hypoglycosylated or unglycosylated. Detected in Sertoli cells (at protein level). Detected in cultured Sertoli cells, testis, epididymis, liver and brain.

It localises to the secreted. The protein localises to the nucleus. It is found in the cytoplasm. Its subcellular location is the mitochondrion membrane. The protein resides in the cytosol. It localises to the microsome. The protein localises to the endoplasmic reticulum. It is found in the mitochondrion. Its subcellular location is the perinuclear region. The protein resides in the cytoplasmic vesicle. It localises to the secretory vesicle. The protein localises to the chromaffin granule. Its function is as follows. Functions as extracellular chaperone that prevents aggregation of non native proteins. Prevents stress-induced aggregation of blood plasma proteins. Inhibits formation of amyloid fibrils by APP, APOC2, B2M, CALCA, CSN3, SNCA and aggregation-prone LYZ variants (in vitro). Does not require ATP. Maintains partially unfolded proteins in a state appropriate for subsequent refolding by other chaperones, such as HSPA8/HSC70. Does not refold proteins by itself. Binding to cell surface receptors triggers internalization of the chaperone-client complex and subsequent lysosomal or proteasomal degradation. When secreted, protects cells against apoptosis and against cytolysis by complement: inhibits assembly of the complement membrane attack complex (MAC) by preventing polymerization of C9 pore component of the MAC complex. Intracellular forms interact with ubiquitin and SCF (SKP1-CUL1-F-box protein) E3 ubiquitin-protein ligase complexes and promote the ubiquitination and subsequent proteasomal degradation of target proteins. Promotes proteasomal degradation of COMMD1 and IKBKB. Modulates NF-kappa-B transcriptional activity. Following stress, promotes apoptosis. Inhibits apoptosis when associated with the mitochondrial membrane by interference with BAX-dependent release of cytochrome c into the cytoplasm. Plays a role in the regulation of cell proliferation. An intracellular form suppresses stress-induced apoptosis by stabilizing mitochondrial membrane integrity through interaction with HSPA5. Secreted form does not affect caspase or BAX-mediated intrinsic apoptosis and TNF-induced NF-kappa-B-activity. Secreted form act as an important modulator during neuronal differentiation through interaction with STMN3. Plays a role in the clearance of immune complexes that arise during cell injury. The protein is Clusterin of Rattus norvegicus (Rat).